Reading from the N-terminus, the 600-residue chain is Single-strand DNA endonuclease 1 (600 aa).

The interval 1–97 (MGVKYLWDVL…KRRLKARFEI (97 aa)) is N-domain. The interval 2–97 (GVKYLWDVLE…KRRLKARFEI (96 aa)) is XPG-N domain. Residues Asp-30, Asp-76, Glu-142, Glu-144, Asp-163, Asp-165, and Asp-215 each contribute to the Mg(2+) site. The interval 130 to 215 (STLGILCLDG…IALALLLGSD (86 aa)) is XPG-I domain. I-domain regions lie at residues 130–218 (STLG…DYSQ) and 130–219 (STLG…YSQG). A 5'-3' exonuclease domain region spans residues 215-353 (DYSQGVRGLR…ILPKVAERNL (139 aa)). Positions 433-458 (MAAKKKKPKPKQKQKETSSPTKSSSL) are disordered. The segment covering 435-444 (AKKKKPKPKQ) has biased composition (basic residues).

Belongs to the XPG/RAD2 endonuclease family. GEN subfamily. Requires Mg(2+) as cofactor.

The protein resides in the nucleus. Its function is as follows. Endonuclease which cleaves flap structures at the junction between single-stranded DNA and double-stranded DNA with a specific cleavage site in the 5' overhang strand exactly one nucleotide 3' of the branch point. Structure- and sequence-specific nuclease that resolves holliday junctions (HJs) by symmetrically oriented incisions in two opposing strands near the junction point, thus leading to ligatable products; HJs are physical links between homologous DNA molecules that arise as central intermediary structures during homologous recombination and repair in meiotic and somatic cells. Structure-specific nuclease with 5'-flap endonuclease activity, preferentially cleaving static flaps 5' overhang strand exactly one nucleotide in the 3' direction of the branch point and, to lower extent, on the two neighboring positions. Also able to cleave double-stranded flap strand 1 one nucleotide in the 3' direction of the branch point. Together with MUS81, essential for the resolution of toxic replication structures to ensure genome stability, and to maintain telomere integrity and replication. The protein is Single-strand DNA endonuclease 1 of Arabidopsis thaliana (Mouse-ear cress).